The primary structure comprises 259 residues: Phosphatidylglycerol--prolipoprotein diacylglyceryl transferase (259 aa).

The next 4 helical transmembrane spans lie at 9-29 (IIFS…VIGI), 55-75 (FITY…VLLY), 92-112 (EGGM…YLFC), and 117-137 (INFL…LFLG). Arginine 138 contacts a 1,2-diacyl-sn-glycero-3-phospho-(1'-sn-glycerol). Helical transmembrane passes span 172–192 (QLYE…YTTF), 201–221 (GLNS…IEIF), and 228–248 (IGFI…MLLL).

Belongs to the Lgt family.

It is found in the cell inner membrane. The enzyme catalyses L-cysteinyl-[prolipoprotein] + a 1,2-diacyl-sn-glycero-3-phospho-(1'-sn-glycerol) = an S-1,2-diacyl-sn-glyceryl-L-cysteinyl-[prolipoprotein] + sn-glycerol 1-phosphate + H(+). The protein operates within protein modification; lipoprotein biosynthesis (diacylglyceryl transfer). Functionally, catalyzes the transfer of the diacylglyceryl group from phosphatidylglycerol to the sulfhydryl group of the N-terminal cysteine of a prolipoprotein, the first step in the formation of mature lipoproteins. The sequence is that of Phosphatidylglycerol--prolipoprotein diacylglyceryl transferase from Rickettsia conorii (strain ATCC VR-613 / Malish 7).